The sequence spans 467 residues: UTP--glucose-1-phosphate uridylyltransferase (467 aa).

UTP contacts are provided by residues 83–86, lysine 97, glutamine 160, and glycine 189; that span reads LNGG. Substrate is bound at residue 85–86; it reads GG. Substrate is bound by residues histidine 190 and 218–220; that span reads NSD. UTP-binding residues include aspartate 220 and lysine 358.

The protein belongs to the UDPGP type 1 family.

It is found in the cytoplasm. It carries out the reaction alpha-D-glucose 1-phosphate + UTP + H(+) = UDP-alpha-D-glucose + diphosphate. Plays a central role as a glucosyl donor in cellular metabolic pathways. This is UTP--glucose-1-phosphate uridylyltransferase (UGPA) from Musa acuminata (Banana).